The primary structure comprises 381 residues: Dual-specificity RNA methyltransferase RlmN (381 aa).

The active-site Proton acceptor is glutamate 96. A Radical SAM core domain is found at 102 to 342 (TDDRGTLCVS…TRTTRGDDID (241 aa)). Cysteine 109 and cysteine 345 are disulfide-bonded. [4Fe-4S] cluster contacts are provided by cysteine 116, cysteine 120, and cysteine 123. Residues 170–171 (GE), serine 202, 224–226 (SLH), and asparagine 302 contribute to the S-adenosyl-L-methionine site. The active-site S-methylcysteine intermediate is the cysteine 345.

Belongs to the radical SAM superfamily. RlmN family. [4Fe-4S] cluster is required as a cofactor.

The protein resides in the cytoplasm. It carries out the reaction adenosine(2503) in 23S rRNA + 2 reduced [2Fe-2S]-[ferredoxin] + 2 S-adenosyl-L-methionine = 2-methyladenosine(2503) in 23S rRNA + 5'-deoxyadenosine + L-methionine + 2 oxidized [2Fe-2S]-[ferredoxin] + S-adenosyl-L-homocysteine. The enzyme catalyses adenosine(37) in tRNA + 2 reduced [2Fe-2S]-[ferredoxin] + 2 S-adenosyl-L-methionine = 2-methyladenosine(37) in tRNA + 5'-deoxyadenosine + L-methionine + 2 oxidized [2Fe-2S]-[ferredoxin] + S-adenosyl-L-homocysteine. In terms of biological role, specifically methylates position 2 of adenine 2503 in 23S rRNA and position 2 of adenine 37 in tRNAs. m2A2503 modification seems to play a crucial role in the proofreading step occurring at the peptidyl transferase center and thus would serve to optimize ribosomal fidelity. The chain is Dual-specificity RNA methyltransferase RlmN from Pseudomonas putida (strain W619).